The primary structure comprises 33 residues: DCLKFGWKCNPRNDKCCSGLKCGSNHNWCKLHI.

3 disulfide bridges follow: Cys-2–Cys-17, Cys-9–Cys-22, and Cys-16–Cys-29. Ile-33 bears the Isoleucine amide mark.

The protein belongs to the neurotoxin 10 (Hwtx-1) family. 55 (ProTx-III) subfamily. Expressed by the venom gland.

The protein resides in the secreted. Its function is as follows. Inhibits voltage-gated sodium channels without significantly altering the voltage dependence of activation or inactivation. Preferentially inhibits human Nav1.7/SCN9A (IC(50)=2.1 nM) &gt; human Nav1.6/SCN8A &gt; human Nav1.2/SCN2A &gt; human Nav1.1/SCN1A &gt; human Nav1.3/SCN3A channels. Exhibits analgesic properties by reversing spontaneous pain induced in mice by intraplantar injection with OD1 (AC P84646), a scorpion toxin that potentiates human Nav1.7/SCN9A. This chain is Mu-theraphotoxin-Tp1a, found in Thrixopelma pruriens (Peruvian green velvet tarantula).